Consider the following 482-residue polypeptide: Capsule synthesis positive regulator AcpB (482 aa).

2 consecutive PRD domains span residues 165-270 and 283-395; these read PFEK…YKDI and EGNL…YTSN.

The protein belongs to the AtxA/AcpA family.

AcpB and AcpA regulate cap gene expression and capsule synthesis. This Bacillus anthracis protein is Capsule synthesis positive regulator AcpB (acpB).